Here is a 273-residue protein sequence, read N- to C-terminus: Patr class II histocompatibility antigen, DO beta chain (273 aa).

Positions 1–26 (MGSGWVPWVVALLVNLTRLDSSMTQG) are cleaved as a signal peptide. The segment at 27–120 (TDSPEDFVIQ…LGAPFTVGRK (94 aa)) is beta-1. Over 27–224 (TDSPEDFVIQ…RAQSEYSWKK (198 aa)) the chain is Extracellular. 2 disulfides stabilise this stretch: C41–C105 and C143–C199. An N-linked (GlcNAc...) asparagine glycan is attached at N45. The beta-2 stretch occupies residues 121-214 (VQPEVTVYPE…SLLSPVSVEW (94 aa)). The region spanning 123–213 (PEVTVYPERT…SSLLSPVSVE (91 aa)) is the Ig-like C1-type domain. The interval 215–224 (RAQSEYSWKK) is connecting peptide. A helical membrane pass occupies residues 225–245 (MLSGIAAFLLGLIFLLVGIVI). Residues 246–273 (QLRAQKGYVRTQMSGNEVSRAVLLPQSC) are Cytoplasmic-facing.

This sequence belongs to the MHC class II family. In terms of assembly, heterodimer of an alpha chain (DOA) and a beta chain (DOB). Forms a heterotetrameric complex with an HLA-DM molecule during intracellular transport in endosomal/lysosomal compartments in B-cells.

It localises to the endosome membrane. The protein resides in the lysosome membrane. Functionally, important modulator in the HLA class II restricted antigen presentation pathway by interaction with the HLA-DM molecule in B-cells. Modifies peptide exchange activity of HLA-DM. In Pan troglodytes (Chimpanzee), this protein is Patr class II histocompatibility antigen, DO beta chain (Patr-DOB).